The following is a 341-amino-acid chain: MIEPVVGYRMLQAIGWPWPGPPADSAWQAMCAMYSQCRPARVIEQHRSGYVVAEAPEVPIKVESLPAWQRRSFPPHERAVVGDWVLLDGRRIVALLPRRTVIKRLAAGEHYRQQLIAANLDTAFIVCGLDGDFNPRRIERYCVLIASGGVEPVVVLTKVDLCVDVAAAVAVLREHSSQALAVVAVDARKAEPVVALYPWLLPGRTVALLGSSGAGKSTLTNTLLGEQRMKVGEVRQRDSRGRHTTTHRALLPLPSGACLIDTPGMRELKFTGEEDLVEEFADIELLATQCRFRDCAHQAEPGCAVRAAIGCGTLDPQRLHHYFKLRGEIVGAADRSMLRRY.

In terms of domain architecture, CP-type G spans 112–268 (RQQLIAANLD…LIDTPGMREL (157 aa)). Residues 157–160 (TKVD) and 210–218 (GSSGAGKST) contribute to the GTP site. 4 residues coordinate Zn(2+): Cys290, Cys295, His297, and Cys303.

This sequence belongs to the TRAFAC class YlqF/YawG GTPase family. RsgA subfamily. Monomer. Associates with 30S ribosomal subunit, binds 16S rRNA. Zn(2+) is required as a cofactor.

The protein resides in the cytoplasm. Functionally, one of several proteins that assist in the late maturation steps of the functional core of the 30S ribosomal subunit. Helps release RbfA from mature subunits. May play a role in the assembly of ribosomal proteins into the subunit. Circularly permuted GTPase that catalyzes slow GTP hydrolysis, GTPase activity is stimulated by the 30S ribosomal subunit. The chain is Small ribosomal subunit biogenesis GTPase RsgA from Xylella fastidiosa (strain Temecula1 / ATCC 700964).